We begin with the raw amino-acid sequence, 317 residues long: Putative 2-hydroxyacid dehydrogenase SERP1888 (317 aa).

NAD(+) is bound by residues 155–156 (EI), 234–236 (AGR), and Asp-260. Arg-236 is a catalytic residue. Glu-265 is a catalytic residue. The active-site Proton donor is the His-283. 283-286 (HIGN) is a binding site for NAD(+).

It belongs to the D-isomer specific 2-hydroxyacid dehydrogenase family.

The sequence is that of Putative 2-hydroxyacid dehydrogenase SERP1888 from Staphylococcus epidermidis (strain ATCC 35984 / DSM 28319 / BCRC 17069 / CCUG 31568 / BM 3577 / RP62A).